Reading from the N-terminus, the 320-residue chain is MKKISLIGAGQIGGTLAHLIGTKEVADEVVLFDVASGIAKGKALDIAQSSSVDGFNVKFSGTDNYEDIKDSDVIIITAGVPRKPGMSRDDLLGINLKIIKQVAEGIKKNAPNAFVICITNPLDVMVMAFQKFSGLPANKVVGMAGILDSSRFKLFLSLELNVPVKEIEAMVMGGHGDTMVPLPRFTKVSGKPLLDLVKEGKISPERLEEINQRTRDGGAEIVKYLEKGSAFYAPAASGVQMAEAYLKDEKKLLPCAVHLNGEYGVSNVYAGVPVIIGKDGVEKIEQIDLDEKEKKEFMHSIDAVKALWEAASKIDPDLSK.

Residues glycine 8–glycine 13 and aspartate 33 each bind NAD(+). The substrate site is built by arginine 82 and arginine 88. NAD(+) is bound by residues asparagine 95 and isoleucine 118–asparagine 120. Residues asparagine 120 and arginine 151 each contribute to the substrate site. Histidine 175 (proton acceptor) is an active-site residue.

It belongs to the LDH/MDH superfamily. MDH type 3 family.

It carries out the reaction (S)-malate + NAD(+) = oxaloacetate + NADH + H(+). Its function is as follows. Catalyzes the reversible oxidation of malate to oxaloacetate. The chain is Malate dehydrogenase from Pelagibacter ubique (strain HTCC1062).